Consider the following 485-residue polypeptide: Adenosylhomocysteinase (485 aa).

Residues threonine 60, aspartate 146, and glutamate 208 each contribute to the substrate site. Threonine 209–threonine 211 contributes to the NAD(+) binding site. Substrate-binding residues include lysine 238 and aspartate 242. NAD(+) contacts are provided by residues asparagine 243, glycine 272–glycine 277, glutamate 295, asparagine 330, isoleucine 351–histidine 353, and asparagine 399.

Belongs to the adenosylhomocysteinase family. It depends on NAD(+) as a cofactor.

The protein localises to the cytoplasm. The enzyme catalyses S-adenosyl-L-homocysteine + H2O = L-homocysteine + adenosine. It participates in amino-acid biosynthesis; L-homocysteine biosynthesis; L-homocysteine from S-adenosyl-L-homocysteine: step 1/1. Functionally, may play a key role in the regulation of the intracellular concentration of adenosylhomocysteine. The sequence is that of Adenosylhomocysteinase from Streptomyces avermitilis (strain ATCC 31267 / DSM 46492 / JCM 5070 / NBRC 14893 / NCIMB 12804 / NRRL 8165 / MA-4680).